The chain runs to 358 residues: Probable aminomethyltransferase (358 aa).

Belongs to the GcvT family. As to quaternary structure, the glycine cleavage system is composed of four proteins: P, T, L and H.

It catalyses the reaction N(6)-[(R)-S(8)-aminomethyldihydrolipoyl]-L-lysyl-[protein] + (6S)-5,6,7,8-tetrahydrofolate = N(6)-[(R)-dihydrolipoyl]-L-lysyl-[protein] + (6R)-5,10-methylene-5,6,7,8-tetrahydrofolate + NH4(+). In terms of biological role, the glycine cleavage system catalyzes the degradation of glycine. The polypeptide is Probable aminomethyltransferase (Natronomonas pharaonis (strain ATCC 35678 / DSM 2160 / CIP 103997 / JCM 8858 / NBRC 14720 / NCIMB 2260 / Gabara) (Halobacterium pharaonis)).